The sequence spans 900 residues: Protein translocase subunit SecA (900 aa).

ATP-binding positions include Gln-87, 105–109, and Asp-510; that span reads GEGKT. Positions 857 to 890 are disordered; it reads DSLDSLSDGGSDSADGQEYPKVGRNEPCPCGSGK. A compositionally biased stretch (low complexity) spans 860–872; the sequence is DSLSDGGSDSADG. The Zn(2+) site is built by Cys-884, Cys-886, Cys-895, and His-896.

It belongs to the SecA family. As to quaternary structure, monomer and homodimer. Part of the essential Sec protein translocation apparatus which comprises SecA, SecYEG and auxiliary proteins SecDF-YajC and YidC. Requires Zn(2+) as cofactor.

The protein resides in the cell inner membrane. The protein localises to the cytoplasm. The catalysed reaction is ATP + H2O + cellular proteinSide 1 = ADP + phosphate + cellular proteinSide 2.. Functionally, part of the Sec protein translocase complex. Interacts with the SecYEG preprotein conducting channel. Has a central role in coupling the hydrolysis of ATP to the transfer of proteins into and across the cell membrane, serving both as a receptor for the preprotein-SecB complex and as an ATP-driven molecular motor driving the stepwise translocation of polypeptide chains across the membrane. The sequence is that of Protein translocase subunit SecA from Marinomonas sp. (strain MWYL1).